We begin with the raw amino-acid sequence, 352 residues long: MSASTTDTLRHDWTLAEVRALFVQPFNDLLFQAQTVHRAHFDANRVQVSTLLSIKTGACPEDCKYCPQSGHYNTGLEKEKLLEVQKVLEEAARAKAIGSTRFCMGAAWKHPSAKDMPYVLEMVKGVKAMGMETCMTLGRLDQEQTEALATAGLDYYNHNLDTSPEFYGSIITTRTYSERLQTLAYVRDAGMKICSGGILGMGESLDDRAGLLIQLANLPEHPESVPINMLVKVAGTPLENAEDVDPFDFIRMLAVARILMPQSHVRLSAGREAMNEQMQALAFFAGANSIFYGDKLLTTANPQADKDMLLFSRLGIKPEAGEGHADEVHQAAIEQALVEQQSSSMFYDAASA.

In terms of domain architecture, Radical SAM core spans Asn44 to Gln262. Cys59, Cys63, and Cys66 together coordinate [4Fe-4S] cluster. Residues Cys103, Cys134, Cys194, and Arg266 each coordinate [2Fe-2S] cluster.

The protein belongs to the radical SAM superfamily. Biotin synthase family. Homodimer. The cofactor is [4Fe-4S] cluster. [2Fe-2S] cluster is required as a cofactor.

The catalysed reaction is (4R,5S)-dethiobiotin + (sulfur carrier)-SH + 2 reduced [2Fe-2S]-[ferredoxin] + 2 S-adenosyl-L-methionine = (sulfur carrier)-H + biotin + 2 5'-deoxyadenosine + 2 L-methionine + 2 oxidized [2Fe-2S]-[ferredoxin]. It participates in cofactor biosynthesis; biotin biosynthesis; biotin from 7,8-diaminononanoate: step 2/2. Catalyzes the conversion of dethiobiotin (DTB) to biotin by the insertion of a sulfur atom into dethiobiotin via a radical-based mechanism. The polypeptide is Biotin synthase (Pseudomonas savastanoi pv. phaseolicola (strain 1448A / Race 6) (Pseudomonas syringae pv. phaseolicola (strain 1448A / Race 6))).